The primary structure comprises 640 residues: Isoniazid-induced protein IniA (640 aa).

Residues 497 to 519 form a helical membrane-spanning segment; sequence IGMLSSVVGLGLFNPLSVGAGLI. Residues 560–628 adopt a coiled-coil conformation; that stretch reads RDRLKMIQRL…QVNDNLAGLE (69 aa).

In terms of assembly, forms multimeric structures containing a central pore.

Its subcellular location is the cell membrane. In terms of biological role, participates in the development of tolerance to both isoniazid and ethambutol. May function through a MDR-pump like mechanism, although it does not appear to directly transport isoniazid from the cell. The protein is Isoniazid-induced protein IniA (iniA) of Mycobacterium tuberculosis (strain CDC 1551 / Oshkosh).